Here is a 216-residue protein sequence, read N- to C-terminus: Corrinoid protein DSY3155 (216 aa).

One can recognise a B12-binding N-terminal domain in the interval 1 to 90; sequence MIMSLLDELK…EIAKKGMSEG (90 aa). Positions 93-216 constitute a B12-binding domain; it reads KGKIVLGTVE…VELANKILGK (124 aa). Residue histidine 106 coordinates methylcob(III)alamin.

Belongs to the methylamine corrinoid protein family.

In terms of biological role, probably harbors a corrinoid prosthetic group and acts as a methyl group carrier between MtgB and MtgA. A methyl group from glycine betaine is likely first transferred to the corrinoid prosthetic group of the enzyme by MtgB, and then transferred to tetrahydrofolate (THF) by MtgA. The methyl group may then be ultimately converted to carbon dioxide, and its oxidation would also provide reducing equivalents for anaerobic respiration. Thus, may function in the pathway that allows anaerobic methylotrophic growth of D.hafniense using glycine betaine. This chain is Corrinoid protein DSY3155, found in Desulfitobacterium hafniense (strain Y51).